A 469-amino-acid polypeptide reads, in one-letter code: Adenosylhomocysteinase (469 aa).

Residues threonine 63, aspartate 139, and glutamate 164 each contribute to the substrate site. NAD(+) is bound at residue 165-167 (TTT). Residues lysine 194 and aspartate 198 each coordinate substrate. Residues asparagine 199, 228 to 233 (GYGDVG), glutamate 251, asparagine 300, 321 to 323 (IGH), and asparagine 375 each bind NAD(+).

The protein belongs to the adenosylhomocysteinase family. NAD(+) is required as a cofactor.

The protein localises to the cytoplasm. The enzyme catalyses S-adenosyl-L-homocysteine + H2O = L-homocysteine + adenosine. The protein operates within amino-acid biosynthesis; L-homocysteine biosynthesis; L-homocysteine from S-adenosyl-L-homocysteine: step 1/1. Its function is as follows. May play a key role in the regulation of the intracellular concentration of adenosylhomocysteine. In Pseudomonas fluorescens (strain Pf0-1), this protein is Adenosylhomocysteinase.